The chain runs to 373 residues: Bilirubin reductase (373 aa).

Q92 contacts FMN. The Proton donor role is filled by R168. An FMN-binding site is contributed by K215. 4 residues coordinate [4Fe-4S] cluster: C344, C347, C351, and C363.

It belongs to the NADH:flavin oxidoreductase/NADH oxidase family. The cofactor is FMN. It depends on [4Fe-4S] cluster as a cofactor.

It carries out the reaction urobilinogen + 4 A = (4Z,15Z)-bilirubin IXalpha + 4 AH2. The enzyme catalyses urobilinogen + 2 A = (4Z,15Z)-mesobilirubin IXalpha + 2 AH2. Its pathway is porphyrin-containing compound metabolism; protoheme degradation. Functionally, bilirubin reductase that catalyzes reduction of mesobilirubin and/or bilirubin to urobilinogen, a key step during heme degradation. Cooperates with BilS, which is probably involved in electron transfer for BilR. Urobilinogen then spontaneously degrades into urobilin, which gives urine its distinctive yellow color. This chain is Bilirubin reductase, found in Clostridium symbiosum (strain WAL-14163).